Here is a 118-residue protein sequence, read N- to C-terminus: NADH-quinone oxidoreductase subunit A 2 (118 aa).

3 helical membrane passes run 5-25, 62-82, and 87-107; these read YLPILVLVVIAVLFGLGSVIF, LIAMLFILFDIEAVFLYPWAV, and LGMFGLIEMGVFIVILFVGYV.

It belongs to the complex I subunit 3 family. As to quaternary structure, NDH-1 is composed of 14 different subunits. Subunits NuoA, H, J, K, L, M, N constitute the membrane sector of the complex.

The protein resides in the cell inner membrane. The catalysed reaction is a quinone + NADH + 5 H(+)(in) = a quinol + NAD(+) + 4 H(+)(out). NDH-1 shuttles electrons from NADH, via FMN and iron-sulfur (Fe-S) centers, to quinones in the respiratory chain. The immediate electron acceptor for the enzyme in this species is believed to be ubiquinone. Couples the redox reaction to proton translocation (for every two electrons transferred, four hydrogen ions are translocated across the cytoplasmic membrane), and thus conserves the redox energy in a proton gradient. The polypeptide is NADH-quinone oxidoreductase subunit A 2 (Citrifermentans bemidjiense (strain ATCC BAA-1014 / DSM 16622 / JCM 12645 / Bem) (Geobacter bemidjiensis)).